The following is a 427-amino-acid chain: Adenylosuccinate synthetase (427 aa).

GTP is bound by residues 12–18 (GDEGKGK) and 40–42 (GHT). Residue aspartate 13 is the Proton acceptor of the active site. Mg(2+)-binding residues include aspartate 13 and glycine 40. IMP is bound by residues 13 to 16 (DEGK), 38 to 41 (NAGH), threonine 128, arginine 142, glutamine 223, threonine 238, and arginine 302. The Proton donor role is filled by histidine 41. Substrate is bound at residue 298-304 (TTTGRPR). GTP-binding positions include arginine 304, 330 to 332 (SID), and 412 to 414 (SVG).

Belongs to the adenylosuccinate synthetase family. As to quaternary structure, homodimer. Mg(2+) serves as cofactor.

The protein resides in the cytoplasm. It catalyses the reaction IMP + L-aspartate + GTP = N(6)-(1,2-dicarboxyethyl)-AMP + GDP + phosphate + 2 H(+). Its pathway is purine metabolism; AMP biosynthesis via de novo pathway; AMP from IMP: step 1/2. In terms of biological role, plays an important role in the de novo pathway of purine nucleotide biosynthesis. Catalyzes the first committed step in the biosynthesis of AMP from IMP. This Staphylococcus epidermidis (strain ATCC 35984 / DSM 28319 / BCRC 17069 / CCUG 31568 / BM 3577 / RP62A) protein is Adenylosuccinate synthetase.